A 704-amino-acid polypeptide reads, in one-letter code: Capsule polysaccharide modification protein LipA (704 aa).

It is found in the cell inner membrane. Involved in the phospholipid modification of the capsular polysaccharide, a strong requirement for its translocation to the cell surface. In Neisseria meningitidis serogroup B (strain ATCC BAA-335 / MC58), this protein is Capsule polysaccharide modification protein LipA (lipA).